The primary structure comprises 463 residues: UDP-N-acetylmuramoyl-L-alanyl-D-glutamate--2,6-diaminopimelate ligase (463 aa).

Thr21 is a binding site for UDP-N-acetyl-alpha-D-muramoyl-L-alanyl-D-glutamate. 94–100 (GTNGKTT) provides a ligand contact to ATP. UDP-N-acetyl-alpha-D-muramoyl-L-alanyl-D-glutamate-binding positions include 137–138 (TT), Ser164, Gln170, and Arg172. Position 204 is an N6-carboxylysine (Lys204). Residues Arg358, 382–385 (DNPR), Gly433, and Glu437 contribute to the meso-2,6-diaminopimelate site. Residues 382-385 (DNPR) carry the Meso-diaminopimelate recognition motif motif.

Belongs to the MurCDEF family. MurE subfamily. The cofactor is Mg(2+). Post-translationally, carboxylation is probably crucial for Mg(2+) binding and, consequently, for the gamma-phosphate positioning of ATP.

Its subcellular location is the cytoplasm. The catalysed reaction is UDP-N-acetyl-alpha-D-muramoyl-L-alanyl-D-glutamate + meso-2,6-diaminopimelate + ATP = UDP-N-acetyl-alpha-D-muramoyl-L-alanyl-gamma-D-glutamyl-meso-2,6-diaminopimelate + ADP + phosphate + H(+). The protein operates within cell wall biogenesis; peptidoglycan biosynthesis. Its function is as follows. Catalyzes the addition of meso-diaminopimelic acid to the nucleotide precursor UDP-N-acetylmuramoyl-L-alanyl-D-glutamate (UMAG) in the biosynthesis of bacterial cell-wall peptidoglycan. The sequence is that of UDP-N-acetylmuramoyl-L-alanyl-D-glutamate--2,6-diaminopimelate ligase from Helicobacter hepaticus (strain ATCC 51449 / 3B1).